A 495-amino-acid chain; its full sequence is EF-hand calcium-binding domain-containing protein 14 (495 aa).

Disordered regions lie at residues 1-50 and 381-404; these read MKKR…EEEE and TNKP…FTSK. The residue at position 17 (Ser17) is a Phosphoserine. Positions 18 to 31 are enriched in basic residues; that stretch reads RRKKPKKGPSSHRL. Residues 37-50 show a composition bias toward acidic residues; it reads PDSDSESSSEEEEE. EF-hand domains lie at 434-463 and 464-495; these read SSTE…WTSL and GSAM…ALGI. Asp477, Asp479, Asp481, Arg483, and Glu488 together coordinate Ca(2+).

This chain is EF-hand calcium-binding domain-containing protein 14 (EFCAB14), found in Homo sapiens (Human).